The chain runs to 749 residues: MIRSKCSCHHHLLVLVMVVLWISPRYASAEDEHAKDFYIIYLGDRPDNTEETIKTHINLLSSLNISQEEAKERKVYSYTKAFNAFAAKLSPHEAKKMMEMEEVVSVSRNQYRKLHTTKSWDFVGLPLTAKRHLKAERDVIIGVLDTGITPDSESFLDHGLGPPPAKWKGSCGPYKNFTGCNNKIIGAKYFKHDGNVPAGEVRSPIDIDGHGTHTSSTVAGVLVANASLYGIANGTARGAVPSARLAMYKVCWARSGCADMDILAGFEAAIHDGVEIISISIGGPIADYSSDSISVGSFHAMRKGILTVASAGNDGPSSGTVTNHEPWILTVAASGIDRTFKSKIDLGNGKSFSGMGISMFSPKAKSYPLVSGVDAAKNTDDKYLARYCFSDSLDRKKVKGKVMVCRMGGGGVESTIKSYGGAGAIIVSDQYLDNAQIFMAPATSVNSSVGDIIYRYINSTRSASAVIQKTRQVTIPAPFVASFSSRGPNPGSIRLLKPDIAAPGIDILAAFTLKRSLTGLDGDTQFSKFTILSGTSMACPHVAGVAAYVKSFHPDWTPAAIKSAIITSAKPISRRVNKDAEFAYGGGQINPRRAASPGLVYDMDDISYVQFLCGEGYNATTLAPLVGTRSVSCSSIVPGLGHDSLNYPTIQLTLRSAKTSTLAVFRRRVTNVGPPSSVYTATVRAPKGVEITVEPQSLSFSKASQKRSFKVVVKAKQMTPGKIVSGLLVWKSPRHSVRSPIVIYSPTSD.

Residues Met1–Ser28 form the signal peptide. The propeptide at Ala29–His115 is activation peptide. Residues Tyr38–His115 form the Inhibitor I9 domain. Residues Ser119–Ala595 enclose the Peptidase S8 domain. Asp145 serves as the catalytic Charge relay system. Asn176 is a glycosylation site (N-linked (GlcNAc...) asparagine). The active-site Charge relay system is the His210. 4 N-linked (GlcNAc...) asparagine glycosylation sites follow: Asn225, Asn233, Asn446, and Asn458. Residue Ser536 is the Charge relay system of the active site. Asn618 carries an N-linked (GlcNAc...) asparagine glycan.

This sequence belongs to the peptidase S8 family. In terms of processing, the C-terminal propeptide is autocleaved. As to expression, expressed only in roots, particularly in xylem.

This is Subtilisin-like protease SBT4.14 from Arabidopsis thaliana (Mouse-ear cress).